The chain runs to 465 residues: Cysteine--tRNA ligase (465 aa).

C27 is a Zn(2+) binding site. A 'HIGH' region motif is present at residues 29-39 (PTVYNFFHIGN). 3 residues coordinate Zn(2+): C207, H232, and E236. A 'KMSKS' region motif is present at residues 264-268 (KMSKS). Residue K267 participates in ATP binding.

This sequence belongs to the class-I aminoacyl-tRNA synthetase family. In terms of assembly, monomer. It depends on Zn(2+) as a cofactor.

The protein localises to the cytoplasm. It carries out the reaction tRNA(Cys) + L-cysteine + ATP = L-cysteinyl-tRNA(Cys) + AMP + diphosphate. The polypeptide is Cysteine--tRNA ligase (Clostridium botulinum (strain 657 / Type Ba4)).